Consider the following 457-residue polypeptide: Streptogrisin-C (457 aa).

Residues 1–34 (MERTTLRRRALVAGTATVAVGALALAGLTGVASA) constitute a signal peptide (tat-type signal). A propeptide spanning residues 35–202 (DPAATAAPPV…ARSAEQPRAL (168 aa)) is cleaved from the precursor. The interval 203–393 (ADIRGGDAYY…QAYGLTLVTS (191 aa)) is catalytic. Cys-219 and Cys-239 are joined by a disulfide. Active-site charge relay system residues include His-238 and Asp-266. Intrachain disulfides connect Cys-305–Cys-315 and Cys-341–Cys-368. Residue Ser-347 is the Charge relay system of the active site. Residues 393 to 412 (SGGGTPTDPPTTPPTDSPGG) form a disordered region. A linker region spans residues 394-413 (GGGTPTDPPTTPPTDSPGGT). Residues 399-408 (TDPPTTPPTD) are compositionally biased toward pro residues. The region spanning 415 to 457 (AVGTAYAAGATVTYGGATYRCLQAHTAQPGWTPADVPALWQRV) is the Chitin-binding type-3 domain.

Belongs to the peptidase S1 family. As to quaternary structure, monomer. Post-translationally, predicted to be exported by the Tat system. The position of the signal peptide cleavage has not been experimentally proven.

Functionally, hydrolysis of proteins with specificity similar to chymotrypsin. May be specialized for the degradation of chitin-linked proteins. Has a primary specificity for large aliphatic or aromatic amino acids. The protein is Streptogrisin-C (sprC) of Streptomyces griseus.